Here is a 718-residue protein sequence, read N- to C-terminus: F-box/LRR-repeat protein 18 (718 aa).

Residues 25 to 72 (GVHLLGFSDEILLHILSHVPSTDLILNVRRTCRKLAALCLDKSLIHTV) form the F-box domain. 12 LRR repeats span residues 77–103 (DYQA…SMAG), 104–128 (CYWL…NLSG), 129–153 (CHLT…AIDV), 177–201 (KQTL…LLYF), 324–352 (CTLS…NLSG), 367–392 (EDDI…NLSA), 393–422 (AHHH…SLPV), 468–492 (CPQP…ELIG), 516–540 (AQSV…TLAQ), 542–567 (PSVL…SLAN), 572–597 (GKVV…RLEQ), and 599–623 (YFSA…CLVS).

Directly interacts with SKP1 and CUL1.

In terms of biological role, substrate-recognition component of the SCF (SKP1-CUL1-F-box protein)-type E3 ubiquitin ligase complex. This Homo sapiens (Human) protein is F-box/LRR-repeat protein 18 (FBXL18).